A 2215-amino-acid polypeptide reads, in one-letter code: MVILQQGDHVWMDLRLGQEFDVPIGAVVKLCDSGQVQVVDDEDNEHWISPQNATHIKPMHPTSVHGVEDMIRLGDLNEAGILRNLLIRYRDHLIYTYTGSILVAVNPYQLLSIYSPEHIRQYTNKKIGEMPPHIFAIADNCYFNMKRNSRDQCCIISGESGAGKTESTKLILQFLAAISGQHSWIEQQVLEATPILEAFGNAKTIRNDNSSRFGKYIDIHFNKRGAIEGAKIEQYLLEKSRVCRQALDERNYHVFYCMLEGMSEDQKKKLGLGQASDYNYLAMGNCITCEGRVDSQEYANIRSAMKVLMFTDTENWEISKLLAAILHLGNLQYEARTFENLDACEVLFSPSLATAASLLEVNPPDLMSCLTSRTLITRGETVSTPLSREQALDVRDAFVKGIYGRLFVWIVDKINAAIYKPPSQDVKNSRRSIGLLDIFGFENFAVNSFEQLCINFANEHLQQFFVRHVFKLEQEEYDLESIDWLHIEFTDNQDALDMIANKPMNIISLIDEESKFPKGTDTTMLHKLNSQHKLNANYIPPKNNHETQFGINHFAGIVYYETQGFLEKNRDTLHGDIIQLVHSSRNKFIKQIFQADVAMGAETRKRSPTLSSQFKRSLELLMRTLGACQPFFVRCIKPNEFKKPMLFDRHLCVRQLRYSGMMETIRIRRAGYPIRYSFVEFVERYRVLLPGVKPAYKQGDLRGTCQRMAEAVLGTHDDWQIGKTKIFLKDHHDMLLEVERDKAITDRVILLQKVIRGFKDRSNFLKLKNAATLIQRHWRGHNCRKNYGLMRLGFLRLQALHRSRKLHQQYRLARQRIIQFQARCRAYLVRKAFRHRLWAVLTVQAYARGMIARRLHQRLRAEYLWRLEAEKMRLAEEEKLRKEMSAKKAKEEAERKHQERLAQLAREDAERELKEKEAARRKKELLEQMERARHEPVNHSDMVDKMFGFLGTSGGLPGQEGQAPSGFEDLERGRREMVEEDLDAALPLPDEDEEDLSEYKFAKFAATYFQGTTTHSYTRRPLKQPLLYHDDEGDQLAALAVWITILRFMGDLPEPKYHTAMSDGSEKIPVMTKIYETLGKKTYKRELQALQGEGEAQLPEGQKKSSVRHKLVHLTLKKKSKLTEEVTKRLHDGESTVQGNSMLEDRPTSNLEKLHFIIGNGILRPALRDEIYCQISKQLTHNPSKSSYARGWILVSLCVGCFAPSEKFVKYLRNFIHGGPPGYAPYCEERLRRTFVNGTRTQPPSWLELQATKSKKPIMLPVTFMDGTTKTLLTDSATTAKELCNALADKISLKDRFGFSLYIALFDKVSSLGSGSDHVMDAISQCEQYAKEQGAQERNAPWRLFFRKEVFTPWHSPSEDNVATNLIYQQVVRGVKFGEYRCEKEDDLAELASQQYFVDYGSEMILERLLNLVPTYIPDREITPLKTLEKWAQLAIAAHKKGIYAQRRTDAQKVKEDVVSYARFKWPLLFSRFYEAYKFSGPSLPKNDVIVAVNWTGVYFVDEQEQVLLELSFPEIMAVSSSRECRVWLSLGCSDLGCAAPHSGWAGLTPAGPCSPCWSCRGAKTTAPSFTLATIKGDEYTFTSSNAEDIRDLVVTFLEGLRKRSKYVVALQDNPNPAGEESGFLSFAKGDLIILDHDTGEQVMNSGWANGINERTKQRGDFPTDSVYVMPTVTMPPREIVALVTMTPDQRQDVVRLLQLRTAEPEVRAKPYTLEEFSYDYFRPPPKHTLSRVMVSKARGKDRLWSHTREPLKQALLKKLLGSEELSQEACLAFIAVLKYMGDYPSKRTRSVNELTDQIFEGPLKAEPLKDEAYVQILKQLTDNHIRYSEERGWELLWLCTGLFPPSNILLPHVQRFLQSRKHCPLAIDCLQRLQKALRNGSRKYPPHLVEVEAIQHKTTQIFHKVYFPDDTDEAFEVESSTKAKDFCQNIATRLLLKSSEGFSLFVKIADKVLSVPENDFFFDFVRHLTDWIKKARPIKDGIVPSLTYQVFFMKKLWTTTVPGKDPMADSIFHYYQELPKYLRGYHKCTREEVLQLGALIYRVKFEEDKSYFPSIPKLLRELVPQDLIRQVSPDDWKRSIVAYFNKHAGKSKEEAKLAFLKLIFKWPTFGSAFFEVKQTTEPNFPEILLIAINKYGVSLIDPKTKDILTTHPFTKISNWSSGNTYFHITIGNLVRGSKLLCETSLGYKMDDLLTSYISQMLTAMSKQRGSRSGK.

The 677-residue stretch at 65–741 folds into the Myosin motor domain; sequence HGVEDMIRLG…HDMLLEVERD (677 aa). 158–165 serves as a coordination point for ATP; the sequence is GESGAGKT. Positions 632–639 are actin-binding; the sequence is FVRCIKPN. IQ domains follow at residues 745 to 765, 768 to 788, 791 to 811, 814 to 834, and 837 to 857; these read TDRV…SNFL, KNAA…KNYG, RLGF…QQYR, RQRI…KAFR, and LWAV…RLHQ. The segment at 858 to 935 is SAH; that stretch reads RLRAEYLWRL…LEQMERARHE (78 aa). The region spanning 1017–1253 is the MyTH4 1 domain; that stretch reads YTRRPLKQPL…PSWLELQATK (237 aa). Positions 1258 to 1602 constitute an FERM 1 domain; the sequence is IMLPVTFMDG…LVVTFLEGLR (345 aa). The residue at position 1569 (Ser-1569) is a Phosphoserine. Position 1571 is a phosphothreonine (Thr-1571). Residues 1603–1672 form the SH3 domain; that stretch reads KRSKYVVALQ…PTDSVYVMPT (70 aa). In terms of domain architecture, MyTH4 2 spans 1747–1896; the sequence is HTREPLKQAL…PHLVEVEAIQ (150 aa). Positions 1902-2205 constitute an FERM 2 domain; the sequence is IFHKVYFPDD…SYISQMLTAM (304 aa).

This sequence belongs to the TRAFAC class myosin-kinesin ATPase superfamily. Myosin family. Might homodimerize in a two headed molecule through the formation of a coiled-coil rod. Identified in a complex with USH1C and USH1G. Interacts with MYRIP. Interacts with RPE65. Interacts with CIB2. May interact with CALM. Interacts with WHRN. Interacts with PLEKHB1 (via PH domain). Interacts with PCDH15. Interacts with TWF2. Interacts with USH1G. Interacts with MYH9. Interacts (via MyTH4-FERM domains) with cytoplasmic regions of ADGRV1 and USH2A. Interacts with PDZD7 (via MyTH4-FERM domains). Interacts with CALML4. Expressed in the pigment epithelium and the photoreceptor cells of the retina. Also found in kidney, liver, testis, cochlea, lymphocytes. Not expressed in brain.

Its subcellular location is the cytoplasm. It localises to the cell cortex. It is found in the cytoskeleton. The protein resides in the synapse. With respect to regulation, ATP hydrolysis is inhibited by Mg(2+), already at a concentration of 0.4 mM. Functionally, myosins are actin-based motor molecules with ATPase activity. Unconventional myosins serve in intracellular movements. Their highly divergent tails bind to membranous compartments, which are then moved relative to actin filaments. In the retina, plays an important role in the renewal of the outer photoreceptor disks. Plays an important role in the distribution and migration of retinal pigment epithelial (RPE) melanosomes and phagosomes, and in the regulation of opsin transport in retinal photoreceptors. In the inner ear, plays an important role in differentiation, morphogenesis and organization of cochlear hair cell bundles. Involved in hair-cell vesicle trafficking of aminoglycosides, which are known to induce ototoxicity. Motor protein that is a part of the functional network formed by USH1C, USH1G, CDH23 and MYO7A that mediates mechanotransduction in cochlear hair cells. Required for normal hearing. This chain is Unconventional myosin-VIIa, found in Homo sapiens (Human).